A 1611-amino-acid chain; its full sequence is Pentafunctional AROM polypeptide (1611 aa).

The tract at residues 1–391 (MSSSSADVLK…YEEKASVVAD (391 aa)) is 3-dehydroquinate synthase. NAD(+)-binding positions include 47–49 (DTN), 84–87 (EGAK), 115–117 (GGV), and D120. R131 is a binding site for 7-phospho-2-dehydro-3-deoxy-D-arabino-heptonate. NAD(+) is bound at residue 140-141 (TT). 2 residues coordinate 7-phospho-2-dehydro-3-deoxy-D-arabino-heptonate: D147 and K153. K162 lines the NAD(+) pocket. N163 lines the 7-phospho-2-dehydro-3-deoxy-D-arabino-heptonate pocket. NAD(+)-binding positions include 180-183 (FLTT) and N191. E195 lines the Zn(2+) pocket. 7-phospho-2-dehydro-3-deoxy-D-arabino-heptonate is bound by residues 195-198 (EVIK) and K257. E267 (proton acceptor; for 3-dehydroquinate synthase activity) is an active-site residue. Residues 271–275 (RNLVN) and H278 each bind 7-phospho-2-dehydro-3-deoxy-D-arabino-heptonate. H278 is a binding site for Zn(2+). H282 functions as the Proton acceptor; for 3-dehydroquinate synthase activity in the catalytic mechanism. The 7-phospho-2-dehydro-3-deoxy-D-arabino-heptonate site is built by H294 and K363. Zn(2+) is bound at residue H294. Positions 404–863 (VKAATPTKSP…WDDLQNKIGV (460 aa)) are EPSP synthase. The active-site For EPSP synthase activity is C845. The shikimate kinase stretch occupies residues 892-1093 (DRPIFLIGMR…SVGNPTSFLS (202 aa)). 899–906 (GMRGAGKT) is an ATP binding site. The tract at residues 1094 to 1318 (LTFPDVTPAL…AAPGQLTARE (225 aa)) is 3-dehydroquinase. The Proton acceptor; for 3-dehydroquinate dehydratase activity role is filled by H1220. K1248 acts as the Schiff-base intermediate with substrate; for 3-dehydroquinate dehydratase activity in catalysis. The tract at residues 1331-1611 (AKKFVLFGSP…RKAVLDKYFA (281 aa)) is shikimate dehydrogenase.

This sequence in the N-terminal section; belongs to the sugar phosphate cyclases superfamily. Dehydroquinate synthase family. In the 2nd section; belongs to the EPSP synthase family. It in the 3rd section; belongs to the shikimate kinase family. The protein in the 4th section; belongs to the type-I 3-dehydroquinase family. This sequence in the C-terminal section; belongs to the shikimate dehydrogenase family. As to quaternary structure, homodimer. Zn(2+) serves as cofactor.

The protein localises to the cytoplasm. The catalysed reaction is 7-phospho-2-dehydro-3-deoxy-D-arabino-heptonate = 3-dehydroquinate + phosphate. It carries out the reaction 3-dehydroquinate = 3-dehydroshikimate + H2O. It catalyses the reaction shikimate + NADP(+) = 3-dehydroshikimate + NADPH + H(+). The enzyme catalyses shikimate + ATP = 3-phosphoshikimate + ADP + H(+). The catalysed reaction is 3-phosphoshikimate + phosphoenolpyruvate = 5-O-(1-carboxyvinyl)-3-phosphoshikimate + phosphate. It participates in metabolic intermediate biosynthesis; chorismate biosynthesis; chorismate from D-erythrose 4-phosphate and phosphoenolpyruvate: step 2/7. It functions in the pathway metabolic intermediate biosynthesis; chorismate biosynthesis; chorismate from D-erythrose 4-phosphate and phosphoenolpyruvate: step 3/7. The protein operates within metabolic intermediate biosynthesis; chorismate biosynthesis; chorismate from D-erythrose 4-phosphate and phosphoenolpyruvate: step 4/7. Its pathway is metabolic intermediate biosynthesis; chorismate biosynthesis; chorismate from D-erythrose 4-phosphate and phosphoenolpyruvate: step 5/7. It participates in metabolic intermediate biosynthesis; chorismate biosynthesis; chorismate from D-erythrose 4-phosphate and phosphoenolpyruvate: step 6/7. Its function is as follows. The AROM polypeptide catalyzes 5 consecutive enzymatic reactions in prechorismate polyaromatic amino acid biosynthesis. The sequence is that of Pentafunctional AROM polypeptide from Cryptococcus neoformans var. neoformans serotype D (strain B-3501A) (Filobasidiella neoformans).